The chain runs to 188 residues: Ribosome-recycling factor (188 aa).

The protein belongs to the RRF family.

It is found in the cytoplasm. Responsible for the release of ribosomes from messenger RNA at the termination of protein biosynthesis. May increase the efficiency of translation by recycling ribosomes from one round of translation to another. This is Ribosome-recycling factor from Blochmanniella pennsylvanica (strain BPEN).